The primary structure comprises 579 residues: Glypican-3 (579 aa).

Positions 1–24 (MAGTVRTACLLVAMLLGLGCLGQA) are cleaved as a signal peptide. Gln-25 is subject to Pyrrolidone carboxylic acid. Intrachain disulfides connect Cys-34–Cys-71, Cys-64–Cys-261, Cys-72–Cys-264, Cys-196–Cys-348, Cys-251–Cys-284, Cys-273–Cys-421, and Cys-277–Cys-409. N-linked (GlcNAc...) asparagine glycans are attached at residues Asn-123 and Asn-240. Ser-351 carries the phosphoserine modification. N-linked (GlcNAc...) asparagine glycosylation occurs at Asn-417. Ser-494 and Ser-508 each carry an O-linked (Xyl...) (glycosaminoglycan) serine glycan. The tract at residues 533 to 552 (DAPGNKQHGNQKDNEITTSH) is disordered. Ser-553 is lipidated: GPI-anchor amidated serine. Residues 554 to 579 (VGNMPSPLKILISVAIYVACFFFLVH) constitute a propeptide, removed in mature form.

Belongs to the glypican family. Heterodimer; disulfide-linked. Cleavage by a furin-like convertase results in production of alpha and beta chains which form a disulfide-linked heterodimer. Interacts with DPP4. Interacts with FGF2. Interacts with WNT5A. Also interacts with WNT3A and WNT7B. Interacts with hedgehog protein SHH; the heparan sulfate chains are not required for the interaction. Also interacts with hedgehog protein IHH. Interacts with CD81. Interacts with Wnt receptors FZD4, FZD7 and FZD8; the heparan sulfate chains are required for the interaction. In terms of processing, O-glycosylated; contains heparan sulfate and/or chondroitin sulfate. Cleaved intracellularly by a furin-like convertase to generate 2 subunits, alpha and beta, which remain associated through disulfide bonds and are associated with the cell surface via the GPI-anchor. This processing is essential for its role in inhibition of hedgehog signaling. A second proteolytic event may result in cleavage of the protein on the cell surface, separating it from the GPI-anchor and leading to its shedding from the cell surface. As to expression, in the developing limb, absent from the apical epidermal ridge at 11 dpc but highly expressed in the underlying mesenchyme. Expression in the mesenchyme at this stage is asymmetric with highest levels in the regions of the distal mesenchyme within the progress zone and within the proximal anterior and posterior limb bud. At later developmental stages including 12.5 and 13.5 dpc, expression is restricted to the interdigital webs and the regions of chondrocytic differentiation of the developing bones. In the embryonic kidney, expressed in both the ureteric bud and mesenchymal cells as early as 13.5 dpc. Expression at 16.5 dpc is similar to that at 13.5 dpc but decreases by 18.5 dpc.

It localises to the cell membrane. Cell surface proteoglycan. Negatively regulates the hedgehog signaling pathway when attached via the GPI-anchor to the cell surface by competing with the hedgehog receptor PTC1 for binding to hedgehog proteins. Binding to the hedgehog protein SHH triggers internalization of the complex by endocytosis and its subsequent lysosomal degradation. Positively regulates the canonical Wnt signaling pathway by binding to the Wnt receptor Frizzled and stimulating the binding of the Frizzled receptor to Wnt ligands. Positively regulates the non-canonical Wnt signaling pathway. Binds to CD81 which decreases the availability of free CD81 for binding to the transcriptional repressor HHEX, resulting in nuclear translocation of HHEX and transcriptional repression. Inhibits the dipeptidyl peptidase activity of DPP4. Plays a role in limb patterning and skeletal development by controlling the cellular response to BMP4. Modulates the effects of growth factors BMP2, BMP7 and FGF7 on renal branching morphogenesis. Required for coronary vascular development. Plays a role in regulating cell movements during gastrulation. This is Glypican-3 (Gpc3) from Mus musculus (Mouse).